The sequence spans 490 residues: Polyamine oxidase 2 (490 aa).

4 residues coordinate FAD: Glu-57, Arg-65, Val-246, and Glu-433. The Microbody targeting signal signature appears at 488–490; that stretch reads SRL.

It belongs to the flavin monoamine oxidase family. The cofactor is FAD. Highly expressed in flowers and siliques. Also found in leaf and stem and in low levels in cotyledons, roots and in seedlings.

Its subcellular location is the peroxisome. The enzyme catalyses spermine + O2 + H2O = 3-aminopropanal + spermidine + H2O2. The catalysed reaction is N(1)-acetylspermine + O2 + H2O = 3-acetamidopropanal + spermidine + H2O2. It carries out the reaction spermidine + O2 + H2O = 3-aminopropanal + putrescine + H2O2. It participates in amine and polyamine degradation; spermine degradation. It functions in the pathway amine and polyamine degradation; spermidine degradation. Functionally, flavoenzyme involved in polyamine back-conversion. Catalyzes the oxidation of the secondary amino group of polyamines, such as spermine, spermidine and their acetyl derivatives. Substrate preference is N(1)-acetylspermine &gt; spermine &gt; spermidine. Plays an important role in the regulation of polyamine intracellular concentration. Involved in abscisic acid-mediated developmental processes. May contribute to nitric oxide-mediated effects on root growth. This Arabidopsis thaliana (Mouse-ear cress) protein is Polyamine oxidase 2.